A 729-amino-acid chain; its full sequence is Cellulose synthase catalytic subunit [UDP-forming] (729 aa).

3 helical membrane passes run 30 to 50 (LATW…VAVP), 110 to 130 (FILG…LVLG), and 171 to 191 (TTVL…IHLL). A catalytic subdomain A region spans residues 151 to 244 (LWPSVDVFIP…YVAIFDCDHI (94 aa)). Residue D193 is part of the active site. The substrate site is built by D240 and D242. A catalytic subdomain B region spans residues 321–381 (TALEEVGGVA…AQRIRWARGM (61 aa)). D337 is an active-site residue. 5 helical membrane passes run 405–425 (LNAM…TAPL), 427–447 (YLFF…AYAL), 520–540 (LFLL…LIYV), 549–569 (IWFN…TIAT), and 610–630 (MAIM…QIGL). A PilZ domain is found at 575–671 (QVRSAHRVPL…QERWLVASTF (97 aa)).

It belongs to the glycosyltransferase 2 family. Mg(2+) is required as a cofactor.

The protein resides in the cell inner membrane. It carries out the reaction [(1-&gt;4)-beta-D-glucosyl](n) + UDP-alpha-D-glucose = [(1-&gt;4)-beta-D-glucosyl](n+1) + UDP + H(+). The protein operates within glycan metabolism; bacterial cellulose biosynthesis. Activated by bis-(3'-5') cyclic diguanylic acid (c-di-GMP). Catalytic subunit of cellulose synthase. It polymerizes uridine 5'-diphosphate glucose to cellulose, which is produced as an extracellular component for mechanical and chemical protection. The sequence is that of Cellulose synthase catalytic subunit [UDP-forming] (bcsA) from Xanthomonas axonopodis pv. citri (strain 306).